Reading from the N-terminus, the 638-residue chain is 1-deoxy-D-xylulose-5-phosphate synthase (638 aa).

Thiamine diphosphate contacts are provided by residues histidine 74 and glycine 115–serine 117. Mg(2+) is bound at residue aspartate 146. Thiamine diphosphate contacts are provided by residues glycine 147–alanine 148, asparagine 175, tyrosine 286, and glutamate 366. Asparagine 175 lines the Mg(2+) pocket.

It belongs to the transketolase family. DXPS subfamily. Homodimer. Mg(2+) is required as a cofactor. It depends on thiamine diphosphate as a cofactor.

The enzyme catalyses D-glyceraldehyde 3-phosphate + pyruvate + H(+) = 1-deoxy-D-xylulose 5-phosphate + CO2. Its pathway is metabolic intermediate biosynthesis; 1-deoxy-D-xylulose 5-phosphate biosynthesis; 1-deoxy-D-xylulose 5-phosphate from D-glyceraldehyde 3-phosphate and pyruvate: step 1/1. Its function is as follows. Catalyzes the acyloin condensation reaction between C atoms 2 and 3 of pyruvate and glyceraldehyde 3-phosphate to yield 1-deoxy-D-xylulose-5-phosphate (DXP). The protein is 1-deoxy-D-xylulose-5-phosphate synthase of Syntrophomonas wolfei subsp. wolfei (strain DSM 2245B / Goettingen).